A 102-amino-acid polypeptide reads, in one-letter code: Small ribosomal subunit protein uS10 (102 aa).

It belongs to the universal ribosomal protein uS10 family. Part of the 30S ribosomal subunit.

Involved in the binding of tRNA to the ribosomes. The sequence is that of Small ribosomal subunit protein uS10 from Rhizobium meliloti (strain 1021) (Ensifer meliloti).